The primary structure comprises 104 residues: ATP-dependent Clp protease adapter protein ClpS (104 aa).

The protein belongs to the ClpS family. As to quaternary structure, binds to the N-terminal domain of the chaperone ClpA.

Its function is as follows. Involved in the modulation of the specificity of the ClpAP-mediated ATP-dependent protein degradation. The chain is ATP-dependent Clp protease adapter protein ClpS from Paraburkholderia xenovorans (strain LB400).